The primary structure comprises 129 residues: UPF0212 protein MA_1372 (129 aa).

It belongs to the UPF0212 family.

The protein is UPF0212 protein MA_1372 of Methanosarcina acetivorans (strain ATCC 35395 / DSM 2834 / JCM 12185 / C2A).